The chain runs to 510 residues: Probable cytochrome P450 4aa1 (510 aa).

A heme-binding site is contributed by C450.

The protein belongs to the cytochrome P450 family. Heme is required as a cofactor.

The protein localises to the endoplasmic reticulum membrane. The protein resides in the microsome membrane. Functionally, may be involved in the metabolism of insect hormones and in the breakdown of synthetic insecticides. The chain is Probable cytochrome P450 4aa1 (Cyp4aa1) from Drosophila melanogaster (Fruit fly).